Consider the following 846-residue polypeptide: Patched domain-containing protein 4 (846 aa).

10 helical membrane-spanning segments follow: residues His-41 to Leu-61, Ser-230 to Leu-250, Gly-265 to Ile-285, Thr-293 to Leu-313, Val-336 to Ser-356, Val-373 to Ala-393, Pro-465 to Ile-485, Pro-660 to Ile-680, Phe-686 to Trp-706, and Leu-718 to Leu-738. The region spanning Ala-233 to Phe-392 is the SSD domain. N-linked (GlcNAc...) asparagine glycosylation occurs at Asn-762. Transmembrane regions (helical) follow at residues Ser-765–Phe-785 and Cys-787–Leu-807.

Belongs to the patched family.

The protein resides in the membrane. Functionally, could act as a repressor of canonical hedgehog signaling by antagonizing the effects of SMO, as suggested by down-regulation of hedgehog target genes, including GLI1, PTCH1, and PTCH2 in PTCHD4-expressing cells. This chain is Patched domain-containing protein 4 (PTCHD4), found in Homo sapiens (Human).